A 245-amino-acid polypeptide reads, in one-letter code: tRNA1(Val) (adenine(37)-N6)-methyltransferase (245 aa).

This sequence belongs to the methyltransferase superfamily. tRNA (adenine-N(6)-)-methyltransferase family.

The protein resides in the cytoplasm. The enzyme catalyses adenosine(37) in tRNA1(Val) + S-adenosyl-L-methionine = N(6)-methyladenosine(37) in tRNA1(Val) + S-adenosyl-L-homocysteine + H(+). Specifically methylates the adenine in position 37 of tRNA(1)(Val) (anticodon cmo5UAC). The sequence is that of tRNA1(Val) (adenine(37)-N6)-methyltransferase from Salmonella paratyphi C (strain RKS4594).